Here is a 481-residue protein sequence, read N- to C-terminus: UDP-glycosyltransferase 85C2 (481 aa).

The Proton acceptor role is filled by His-23. An anthocyanidin is bound at residue His-23. Asp-120 serves as the catalytic Charge relay. Residues Thr-143, Gln-362, His-377, Trp-380, Ser-382, Glu-385, Asp-401, and Gln-402 each coordinate UDP-alpha-D-glucose.

Belongs to the UDP-glycosyltransferase family.

It carries out the reaction steviol + UDP-alpha-D-glucose = steviolmonoside + UDP + H(+). It catalyses the reaction steviolmonoside + UDP-alpha-D-glucose = rubusoside + UDP. Functionally, involved in the biosynthesis of steviol glycosides in leaves. Converts steviol to the mono-glycoside steviolmonoside. Converts the mono-glycoside steviolmonoside to the bi-glycoside rubusoside. This is UDP-glycosyltransferase 85C2 from Stevia rebaudiana (Stevia).